The chain runs to 141 residues: Putative pre-16S rRNA nuclease (141 aa).

The protein belongs to the YqgF nuclease family.

It is found in the cytoplasm. In terms of biological role, could be a nuclease involved in processing of the 5'-end of pre-16S rRNA. The protein is Putative pre-16S rRNA nuclease of Coxiella burnetii (strain CbuK_Q154) (Coxiella burnetii (strain Q154)).